Reading from the N-terminus, the 158-residue chain is Cyclic pyranopterin monophosphate synthase (158 aa).

Substrate contacts are provided by residues 75 to 77 (LCH) and 113 to 114 (ME). The active site involves D128.

This sequence belongs to the MoaC family. As to quaternary structure, homohexamer; trimer of dimers.

It catalyses the reaction (8S)-3',8-cyclo-7,8-dihydroguanosine 5'-triphosphate = cyclic pyranopterin phosphate + diphosphate. It functions in the pathway cofactor biosynthesis; molybdopterin biosynthesis. Functionally, catalyzes the conversion of (8S)-3',8-cyclo-7,8-dihydroguanosine 5'-triphosphate to cyclic pyranopterin monophosphate (cPMP). The protein is Cyclic pyranopterin monophosphate synthase of Paraburkholderia xenovorans (strain LB400).